The chain runs to 504 residues: Arabinose import ATP-binding protein AraG (504 aa).

2 ABC transporter domains span residues 8-243 and 256-499; these read LSFR…MVGR and YGEE…MPKV. 40 to 47 contacts ATP; it reads GENGAGKS.

It belongs to the ABC transporter superfamily. Arabinose importer (TC 3.A.1.2.2) family. The complex is composed of two ATP-binding proteins (AraG), two transmembrane proteins (AraH) and a solute-binding protein (AraF).

Its subcellular location is the cell inner membrane. The enzyme catalyses L-arabinose(out) + ATP + H2O = L-arabinose(in) + ADP + phosphate + H(+). Functionally, part of the ABC transporter complex AraFGH involved in arabinose import. Responsible for energy coupling to the transport system. This Escherichia coli O157:H7 protein is Arabinose import ATP-binding protein AraG.